The sequence spans 345 residues: N-acetyl-gamma-glutamyl-phosphate reductase (345 aa).

Residue Cys-153 is part of the active site.

This sequence belongs to the NAGSA dehydrogenase family. Type 1 subfamily.

It localises to the cytoplasm. It carries out the reaction N-acetyl-L-glutamate 5-semialdehyde + phosphate + NADP(+) = N-acetyl-L-glutamyl 5-phosphate + NADPH + H(+). It functions in the pathway amino-acid biosynthesis; L-arginine biosynthesis; N(2)-acetyl-L-ornithine from L-glutamate: step 3/4. Catalyzes the NADPH-dependent reduction of N-acetyl-5-glutamyl phosphate to yield N-acetyl-L-glutamate 5-semialdehyde. The protein is N-acetyl-gamma-glutamyl-phosphate reductase of Methylacidiphilum infernorum (isolate V4) (Methylokorus infernorum (strain V4)).